We begin with the raw amino-acid sequence, 880 residues long: Valine--tRNA ligase (880 aa).

A 'HIGH' region motif is present at residues 51–61 (PNVTGELHLGH). The 'KMSKS' region signature appears at 529-533 (KMSKT). Lys532 is an ATP binding site. Residues 815–854 (MSTMVDLEVEAKRVKAEISELEIQIERLSTRLSDEQFLAK) are a coiled coil.

It belongs to the class-I aminoacyl-tRNA synthetase family. ValS type 1 subfamily. In terms of assembly, monomer.

It is found in the cytoplasm. It catalyses the reaction tRNA(Val) + L-valine + ATP = L-valyl-tRNA(Val) + AMP + diphosphate. Its function is as follows. Catalyzes the attachment of valine to tRNA(Val). As ValRS can inadvertently accommodate and process structurally similar amino acids such as threonine, to avoid such errors, it has a 'posttransfer' editing activity that hydrolyzes mischarged Thr-tRNA(Val) in a tRNA-dependent manner. The chain is Valine--tRNA ligase from Dehalococcoides mccartyi (strain CBDB1).